Consider the following 108-residue polypeptide: UPF0145 protein Tmel_1129 (108 aa).

The protein belongs to the UPF0145 family.

The chain is UPF0145 protein Tmel_1129 from Thermosipho melanesiensis (strain DSM 12029 / CIP 104789 / BI429).